Consider the following 165-residue polypeptide: Fatty acid-binding protein homolog 3 (165 aa).

The N-terminal stretch at 1–19 (MNLYLTLFSFCFLAIMAEA) is a signal peptide.

Belongs to the calycin superfamily. Fatty-acid binding protein (FABP) family. As to expression, expressed in presumptive hypodermal cells by the comma stage and in posterior body wall muscle cells by the two-fold stage. From L1 to adult stages, expression continues in body wall muscle cells adjacent to the pseudocoelom, while hypodermal expression is extinguished.

It localises to the secreted. Its function is as follows. May play a role in sequestering potentially toxic fatty acids and their peroxidation products, or it may be involved in the maintenance of the impermeable lipid layer of the eggshell. The polypeptide is Fatty acid-binding protein homolog 3 (lbp-3) (Caenorhabditis elegans).